We begin with the raw amino-acid sequence, 695 residues long: Adhesion G protein-coupled receptor F4 (695 aa).

Positions 1–21 (MKMKSQATMICCLVFFLSTEC) are cleaved as a signal peptide. At 22–406 (SHYRSKIHLK…TDKVLDYITC (385 aa)) the chain is on the extracellular side. 12 N-linked (GlcNAc...) asparagine glycosylation sites follow: asparagine 61, asparagine 169, asparagine 177, asparagine 209, asparagine 229, asparagine 250, asparagine 257, asparagine 263, asparagine 264, asparagine 286, asparagine 309, and asparagine 340. The 149-residue stretch at 249-397 (HNTSEKSLNF…SILMSSKSMT (149 aa)) folds into the GAIN-B domain. Cystine bridges form between cysteine 349–cysteine 376 and cysteine 364–cysteine 378. Residues 349–397 (CVGWHSKKRRWDEKACQMMLDIRNEVKCRCNYTSVVMSFSILMSSKSMT) are GPS. A glycan (N-linked (GlcNAc...) asparagine) is linked at asparagine 379. The helical transmembrane segment at 407–427 (IGLSVSILSLVLCLIIEATVW) threads the bilayer. The Cytoplasmic segment spans residues 428–440 (SRVVVTEISYMRH). A helical transmembrane segment spans residues 441–461 (VCIVNIAVSLLTANVWFIIGS). Topologically, residues 462–485 (HFNIKAQDYNMCVAVTFFSHFFYL) are extracellular. A helical transmembrane segment spans residues 486 to 506 (SLFFWMLFKALLIIYGILVIF). Topologically, residues 507 to 515 (RRMMKSRMM) are cytoplasmic. Residues 516–536 (VIGFAIGYGCPLIIAVTTVAI) traverse the membrane as a helical segment. The Extracellular segment spans residues 537 to 561 (TEPEKGYMRPEACWLNWDNTKALLA). The helical transmembrane segment at 562–582 (FAIPAFVIVAVNLIVVLVVAV) threads the bilayer. Topologically, residues 583-606 (NTQRPSIGSSKSQDVVIIMRISKN) are cytoplasmic. A helical membrane pass occupies residues 607 to 627 (VAILTPLLGLTWGFGIATLIE). The Extracellular portion of the chain corresponds to 628–634 (GTSLTFH). A helical membrane pass occupies residues 635-655 (IIFALLNAFQGFFILLFGTIM). Over 656-695 (DHKIRDALRMRMSSLKGKSRAAENASLGPTNGSKLMNRQG) the chain is Cytoplasmic. The interval 674–695 (SRAAENASLGPTNGSKLMNRQG) is disordered. Residues 682 to 695 (LGPTNGSKLMNRQG) are compositionally biased toward polar residues.

The protein belongs to the G-protein coupled receptor 2 family. Adhesion G-protein coupled receptor (ADGR) subfamily.

The protein resides in the membrane. Functionally, orphan receptor. The protein is Adhesion G protein-coupled receptor F4 (ADGRF4) of Homo sapiens (Human).